Reading from the N-terminus, the 896-residue chain is DNA mismatch repair protein MutS (896 aa).

Glycine 607–serine 614 is an ATP binding site. The tract at residues alanine 809–threonine 835 is disordered.

Belongs to the DNA mismatch repair MutS family.

In terms of biological role, this protein is involved in the repair of mismatches in DNA. It is possible that it carries out the mismatch recognition step. This protein has a weak ATPase activity. This chain is DNA mismatch repair protein MutS, found in Lactiplantibacillus plantarum (strain ATCC BAA-793 / NCIMB 8826 / WCFS1) (Lactobacillus plantarum).